A 294-amino-acid chain; its full sequence is Ribosomal RNA small subunit methyltransferase A (294 aa).

The S-adenosyl-L-methionine site is built by asparagine 33, leucine 35, glycine 60, glutamate 81, aspartate 106, and asparagine 131.

Belongs to the class I-like SAM-binding methyltransferase superfamily. rRNA adenine N(6)-methyltransferase family. RsmA subfamily.

It is found in the cytoplasm. The enzyme catalyses adenosine(1518)/adenosine(1519) in 16S rRNA + 4 S-adenosyl-L-methionine = N(6)-dimethyladenosine(1518)/N(6)-dimethyladenosine(1519) in 16S rRNA + 4 S-adenosyl-L-homocysteine + 4 H(+). Functionally, specifically dimethylates two adjacent adenosines (A1518 and A1519) in the loop of a conserved hairpin near the 3'-end of 16S rRNA in the 30S particle. May play a critical role in biogenesis of 30S subunits. This is Ribosomal RNA small subunit methyltransferase A from Lactococcus lactis subsp. lactis (strain IL1403) (Streptococcus lactis).